Consider the following 624-residue polypeptide: MLGKALLLLLSSPICALAQSAADYYVKSIPGQPDGPLLKMHAGHIEVDAQTNGHLFFWHFQNRHIANRQRTIIWLNGGPGCSSMDGALMEIGPYRVKDDHTLVYNNGSWDEFANLLFIDQPVGTGFSYVNTNSFLHDLDHVSSHMVTFLDKWFAMFPEYESDDLYIAGESWAGQYIPHIARAIVARNKNIDSKQQPWVLKGLLIGNGWISPLDQYPATMQYAYAEGLVKEGSSTATSLDAMNDACAQKLADPGSQNMIRIGQCESVLDSLMRLTRTSEEECVNMYDIRLKDASCGRTWPPDLDPMTRYLQRTEVRSALNLDREQTNSWTECNDQVGFNLRLENPGVPAVHLLPDLIESGVKILLFSGDRDLICNHLGTEQLIHNMKWSGGTGFETKPGVWAPRRDWTFEGDAAGYYQQARNLTYVLFYNASHMVPYDWPRRTRDMVDRFINVDIANIGGTPADSRLDGEKLPQTSVGNTTSSTSESDQVDQEKLKDAEWKAYAKSGEAALIVVIIGVSVWGFFIWRARQRASRGSSPSKKGYRSVYPGGSNNTSSSDGAGLLSRFRNNTNNNASSDLEARDFDEAELDSLSPGLQNARERDHYVIGEEDEEDEDIGNGAKSSLH.

The first 18 residues, 1–18, serve as a signal peptide directing secretion; that stretch reads MLGKALLLLLSSPICALA. Residues 19–504 lie on the Lumenal side of the membrane; it reads QSAADYYVKS…KDAEWKAYAK (486 aa). N106 carries an N-linked (GlcNAc...) asparagine glycan. Catalysis depends on residues S170 and D370. N-linked (GlcNAc...) asparagine glycans are attached at residues N421 and N429. H432 is an active-site residue. The disordered stretch occupies residues 461–491; it reads PADSRLDGEKLPQTSVGNTTSSTSESDQVDQ. Residues 472–486 show a composition bias toward polar residues; sequence PQTSVGNTTSSTSES. N478 carries an N-linked (GlcNAc...) asparagine glycan. Residues 505 to 525 form a helical membrane-spanning segment; the sequence is SGEAALIVVIIGVSVWGFFIW. The Cytoplasmic portion of the chain corresponds to 526-624; that stretch reads RARQRASRGS…IGNGAKSSLH (99 aa). Residues 533–624 form a disordered region; sequence RGSSPSKKGY…IGNGAKSSLH (92 aa). Positions 565–575 are enriched in polar residues; that stretch reads FRNNTNNNASS. The segment covering 606-615 has biased composition (acidic residues); that stretch reads GEEDEEDEDI.

It belongs to the peptidase S10 family.

It is found in the golgi apparatus. The protein resides in the trans-Golgi network membrane. It catalyses the reaction Preferential release of a C-terminal arginine or lysine residue.. Its function is as follows. Protease with a carboxypeptidase B-like function involved in the C-terminal processing of the lysine and arginine residues from protein precursors. Promotes cell fusion and is involved in the programmed cell death. This Talaromyces stipitatus (strain ATCC 10500 / CBS 375.48 / QM 6759 / NRRL 1006) (Penicillium stipitatum) protein is Pheromone-processing carboxypeptidase kex1 (kex1).